The following is a 221-amino-acid chain: ATP synthase subunit a 1 (221 aa).

5 helical membrane passes run 20-40 (LTIV…ALIT), 78-98 (YLPF…CTVI), 108-128 (LSTT…FGIA), 174-194 (MILV…MNIL), and 196-216 (LLTG…YIAA).

This sequence belongs to the ATPase A chain family. F-type ATPases have 2 components, CF(1) - the catalytic core - and CF(0) - the membrane proton channel. CF(1) has five subunits: alpha(3), beta(3), gamma(1), delta(1), epsilon(1). CF(0) has four main subunits: a, b, b' and c.

The protein resides in the cell inner membrane. Functionally, key component of the proton channel; it plays a direct role in the translocation of protons across the membrane. This is ATP synthase subunit a 1 from Chlorobaculum tepidum (strain ATCC 49652 / DSM 12025 / NBRC 103806 / TLS) (Chlorobium tepidum).